Reading from the N-terminus, the 143-residue chain is MAKKIDGYIKLQVPAGKANPSPPIGPALGQKGVNIMAFCKEFNAATSNQEPGLPIPTEITVYSDKSFTFIMKSPPAAYLLRKAAGIAKGSGTPNTAKVGKVDRAQLEDIVKTKDADLTAADLDAAVRTIAGTARSMGITVEGV.

The protein belongs to the universal ribosomal protein uL11 family. In terms of assembly, part of the ribosomal stalk of the 50S ribosomal subunit. Interacts with L10 and the large rRNA to form the base of the stalk. L10 forms an elongated spine to which L12 dimers bind in a sequential fashion forming a multimeric L10(L12)X complex. In terms of processing, one or more lysine residues are methylated.

Forms part of the ribosomal stalk which helps the ribosome interact with GTP-bound translation factors. This is Large ribosomal subunit protein uL11 from Psychrobacter cryohalolentis (strain ATCC BAA-1226 / DSM 17306 / VKM B-2378 / K5).